The chain runs to 101 residues: Ribonuclease P protein component 1 (101 aa).

The protein belongs to the eukaryotic/archaeal RNase P protein component 1 family. Consists of a catalytic RNA component and at least 4-5 protein subunits.

The protein localises to the cytoplasm. It carries out the reaction Endonucleolytic cleavage of RNA, removing 5'-extranucleotides from tRNA precursor.. Part of ribonuclease P, a protein complex that generates mature tRNA molecules by cleaving their 5'-ends. The polypeptide is Ribonuclease P protein component 1 (Methanococcoides burtonii (strain DSM 6242 / NBRC 107633 / OCM 468 / ACE-M)).